We begin with the raw amino-acid sequence, 108 residues long: ATP-dependent Clp protease adapter protein ClpS (108 aa).

Belongs to the ClpS family. As to quaternary structure, binds to the N-terminal domain of the chaperone ClpA.

Involved in the modulation of the specificity of the ClpAP-mediated ATP-dependent protein degradation. This chain is ATP-dependent Clp protease adapter protein ClpS, found in Cupriavidus metallidurans (strain ATCC 43123 / DSM 2839 / NBRC 102507 / CH34) (Ralstonia metallidurans).